The primary structure comprises 529 residues: Bifunctional purine biosynthesis protein PurH (529 aa).

Positions 1–148 (MNNVRPIRRA…KNHKDTTIVV (148 aa)) constitute an MGS-like domain.

This sequence belongs to the PurH family.

The catalysed reaction is (6R)-10-formyltetrahydrofolate + 5-amino-1-(5-phospho-beta-D-ribosyl)imidazole-4-carboxamide = 5-formamido-1-(5-phospho-D-ribosyl)imidazole-4-carboxamide + (6S)-5,6,7,8-tetrahydrofolate. It catalyses the reaction IMP + H2O = 5-formamido-1-(5-phospho-D-ribosyl)imidazole-4-carboxamide. Its pathway is purine metabolism; IMP biosynthesis via de novo pathway; 5-formamido-1-(5-phospho-D-ribosyl)imidazole-4-carboxamide from 5-amino-1-(5-phospho-D-ribosyl)imidazole-4-carboxamide (10-formyl THF route): step 1/1. It functions in the pathway purine metabolism; IMP biosynthesis via de novo pathway; IMP from 5-formamido-1-(5-phospho-D-ribosyl)imidazole-4-carboxamide: step 1/1. The sequence is that of Bifunctional purine biosynthesis protein PurH from Shewanella frigidimarina (strain NCIMB 400).